A 371-amino-acid polypeptide reads, in one-letter code: MDTRSGSQCSVTPEAIRNNEELVLPPRISRVNGWSLPLHYFRVVTWAVFVGLSLATFRIFIPLLPHSWKYIAYVVTGGIFSFHLVVHLIASCIDPADSNVRLMKNYSQPMPLFDRSKHAHVIQNQFCHLCKVTVNKKTKHCISCNKCVSGFDHHCKWINNCVGSRNYWFFFSTVASATAGMLCLIAILLYVLVQYLVNPRVLRTDPRYEDVKNMNTWLLFLPLFPVQVQTLIVVIIRMLVLLLDLLGLVQLGQLLIFHIYLKAKKMTTFEYLINTRKEESSKHQAVRKDPYVQMDKGFLQQGAGALGSSAQGVKAKSSLLIYKCPCHFCTSVNQDGDSKAQEADDAPSTSTLGLQQETTEPMKTDSAESED.

The next 2 membrane-spanning stretches (helical) occupy residues 43-63 (VVTWAVFVGLSLATFRIFIPL) and 70-90 (YIAYVVTGGIFSFHLVVHLIA). A DHHC domain is found at 125–175 (QFCHLCKVTVNKKTKHCISCNKCVSGFDHHCKWINNCVGSRNYWFFFSTVA). Catalysis depends on C155, which acts as the S-palmitoyl cysteine intermediate. The next 3 membrane-spanning stretches (helical) occupy residues 177–197 (ATAGMLCLIAILLYVLVQYLV), 216–236 (TWLLFLPLFPVQVQTLIVVII), and 239–259 (LVLLLDLLGLVQLGQLLIFHI). Residues 335–371 (DGDSKAQEADDAPSTSTLGLQQETTEPMKTDSAESED) form a disordered region. Residues 347 to 359 (PSTSTLGLQQETT) are compositionally biased toward polar residues. Over residues 360–371 (EPMKTDSAESED) the composition is skewed to basic and acidic residues.

The protein belongs to the DHHC palmitoyltransferase family.

It is found in the membrane. It carries out the reaction L-cysteinyl-[protein] + hexadecanoyl-CoA = S-hexadecanoyl-L-cysteinyl-[protein] + CoA. Functionally, probable palmitoyltransferase that could catalyze the addition of palmitate onto various protein substrates and be involved in a variety of cellular processes. May play a role in cell proliferation. The protein is Probable palmitoyltransferase ZDHHC11B of Homo sapiens (Human).